A 130-amino-acid chain; its full sequence is MRLATVIVLCSLFLGVSGDGWYSFFREAVQGTWDLWRAYRDNLEANYQNADQYFYARGNYEAQQRGSGGIWAAKIISTSRKYFQGLLNRYYFGIRNHGLETLQATQKAEEWGRSGKNPNHFRPEGLPEKF.

Residues 1–18 form the signal peptide; that stretch reads MRLATVIVLCSLFLGVSG. A disordered region spans residues 109 to 130; sequence EEWGRSGKNPNHFRPEGLPEKF. The segment covering 121–130 has biased composition (basic and acidic residues); that stretch reads FRPEGLPEKF.

It belongs to the SAA family. In terms of assembly, apolipoprotein of the HDL complex. As to expression, expressed by the liver; secreted in plasma.

The protein localises to the secreted. Functionally, major acute phase reactant. In Mus musculus (Mouse), this protein is Serum amyloid A-4 protein.